We begin with the raw amino-acid sequence, 75 residues long: Protein BsdD (75 aa).

Its function is as follows. Involved in the non-oxidative decarboxylation and detoxification of phenolic derivatives under both aerobic and anaerobic conditions, however the precise biochemical function of BsdD in metabolism of phenolic acid is unknown. This chain is Protein BsdD, found in Bacillus subtilis (strain 168).